The chain runs to 604 residues: Glucose oxidase 2 (604 aa).

The first 16 residues, 1 to 16, serve as a signal peptide directing secretion; that stretch reads MKLLGLLSGLVVVATA. Residues Leu-49 and Thr-50 each coordinate FAD. Asn-63 is a glycosylation site (N-linked (GlcNAc...) asparagine). Glu-70 contacts FAD. Asn-109 carries an N-linked (GlcNAc...) asparagine glycan. The FAD site is built by Ser-123, Asn-127, Gly-128, and Ser-130. Cys-184 and Cys-226 are joined by a disulfide. The N-linked (GlcNAc...) asparagine glycan is linked to Asn-214. Residue Val-270 coordinates FAD. N-linked (GlcNAc...) asparagine glycans are attached at residues Asn-375, Asn-408, and Asn-517. The Proton acceptor role is filled by His-536. O2 contacts are provided by Arg-557 and Val-558. 2 residues coordinate FAD: Gly-569 and Met-581. Asn-600 is a glycosylation site (N-linked (GlcNAc...) asparagine).

This sequence belongs to the GMC oxidoreductase family. In terms of assembly, homodimer. FAD serves as cofactor.

Its subcellular location is the secreted. It localises to the cell wall. The protein resides in the cytoplasm. It is found in the extracellular space. The protein localises to the extracellular matrix. The enzyme catalyses beta-D-glucose + O2 = D-glucono-1,5-lactone + H2O2. In terms of biological role, glucose oxidase catalyzes the oxidation of beta-D-glucose to D-glucono-delta-lactone and hydrogen peroxide in the presence of molecular oxygen. D-glucono-delta-lactone is sequentially hydrolyzed by lactonase to D-gluconic acid, and the resulting hydrogen peroxide is hydrolyzed by catalase to oxygen and water. Acts as a key factor contributing to fungal disease of apple. The production of gluconic acid leads to host tissue acidification that enhances the expression of pectolytic enzymes and the establishment of conditions for necrotrophic development of P.expansum. This chain is Glucose oxidase 2, found in Penicillium expansum (Blue mold rot fungus).